The following is a 523-amino-acid chain: 11-oxo-beta-amyrin 30-oxidase (523 aa).

The helical transmembrane segment at Ala-9 to Val-29 threads the bilayer. Cys-471 is a heme binding site.

This sequence belongs to the cytochrome P450 family. Heme is required as a cofactor. Expressed in roots, stolons and stems. Not detected in leaves.

Its subcellular location is the membrane. It catalyses the reaction 11-oxo-beta-amyrin + 3 reduced [NADPH--hemoprotein reductase] + 3 O2 = glycyrrhetinate + 3 oxidized [NADPH--hemoprotein reductase] + 4 H2O + 4 H(+). The enzyme catalyses 11-oxo-beta-amyrin + reduced [NADPH--hemoprotein reductase] + O2 = 30-hydroxy-11-oxo-beta-amyrin + oxidized [NADPH--hemoprotein reductase] + H2O + H(+). The catalysed reaction is 30-hydroxy-11-oxo-beta-amyrin + reduced [NADPH--hemoprotein reductase] + O2 = glycyrrhetaldehyde + oxidized [NADPH--hemoprotein reductase] + 2 H2O + H(+). It carries out the reaction glycyrrhetaldehyde + reduced [NADPH--hemoprotein reductase] + O2 = glycyrrhetinate + oxidized [NADPH--hemoprotein reductase] + H2O + 2 H(+). Functionally, involved in the biosynthesis of Glycyrrhetinic acid (GA), a natural product which exhibits anti-inflammatory activity. Involved in the biosynthesis of the triterpenoid saponin glycyrrhizin. Catalyzes three sequential oxidation steps at C-30 of 11-oxo-beta-amyrin. Also able to catalyze C-30 monohydroxylation of beta-amyrin to produce 30-hydroxy-beta-amyrin. May be also responsible for the oxidation at positions C-22 and C-29 in addition to C-30. The chain is 11-oxo-beta-amyrin 30-oxidase from Glycyrrhiza uralensis (Chinese licorice).